Consider the following 239-residue polypeptide: Mitochondrial fission factor homolog B (239 aa).

At M1–M219 the chain is on the cytoplasmic side. Residues E107–N139 form a disordered region. A compositionally biased stretch (basic and acidic residues) spans H115–L130. Positions D184–R214 form a coiled coil. A helical; Anchor for type IV membrane protein membrane pass occupies residues T220–F237. Residues R238–R239 lie on the Extracellular side of the membrane.

Belongs to the Tango11 family.

The protein localises to the mitochondrion outer membrane. The protein resides in the peroxisome. In terms of biological role, plays a role in mitochondrial and peroxisomal fission. Promotes the recruitment and association of the fission mediator dynamin-related protein 1 (DNM1L) to the mitochondrial surface. The chain is Mitochondrial fission factor homolog B (mff-b) from Xenopus laevis (African clawed frog).